Consider the following 460-residue polypeptide: V-type ATP synthase beta chain 2 (460 aa).

The protein belongs to the ATPase alpha/beta chains family.

Functionally, produces ATP from ADP in the presence of a proton gradient across the membrane. The V-type beta chain is a regulatory subunit. In Clostridium tetani (strain Massachusetts / E88), this protein is V-type ATP synthase beta chain 2.